Reading from the N-terminus, the 229-residue chain is Large ribosomal subunit protein uL1 (229 aa).

The protein belongs to the universal ribosomal protein uL1 family. In terms of assembly, part of the 50S ribosomal subunit.

Functionally, binds directly to 23S rRNA. The L1 stalk is quite mobile in the ribosome, and is involved in E site tRNA release. In terms of biological role, protein L1 is also a translational repressor protein, it controls the translation of the L11 operon by binding to its mRNA. In Clostridium botulinum (strain ATCC 19397 / Type A), this protein is Large ribosomal subunit protein uL1.